We begin with the raw amino-acid sequence, 217 residues long: Adenylate kinase (217 aa).

ATP is bound at residue 10-15 (GAGKGT). The segment at 30–59 (STGDMFREAVAAGTELGVKVQNILSSGALV) is NMP. Residues T31, R36, 57–59 (ALV), 85–88 (GYPR), and Q92 each bind AMP. The tract at residues 126–163 (SRRICPKCGKIYNLISMPPVSDQICDDCGEQLVIREDD) is LID. R127 serves as a coordination point for ATP. 2 residues coordinate Zn(2+): C130 and C133. 136–137 (IY) provides a ligand contact to ATP. Residues C150 and C153 each coordinate Zn(2+). The AMP site is built by R160 and R171. ATP is bound at residue R199.

The protein belongs to the adenylate kinase family. In terms of assembly, monomer.

The protein resides in the cytoplasm. It carries out the reaction AMP + ATP = 2 ADP. The protein operates within purine metabolism; AMP biosynthesis via salvage pathway; AMP from ADP: step 1/1. Catalyzes the reversible transfer of the terminal phosphate group between ATP and AMP. Plays an important role in cellular energy homeostasis and in adenine nucleotide metabolism. The protein is Adenylate kinase of Pseudothermotoga lettingae (strain ATCC BAA-301 / DSM 14385 / NBRC 107922 / TMO) (Thermotoga lettingae).